The primary structure comprises 2869 residues: uncharacterized protein (2869 aa).

Residues 1-10 (MNINRNNIND) are compositionally biased toward low complexity. Disordered regions lie at residues 1 to 132 (MNIN…SSNK), 171 to 349 (NNNN…DNYR), 380 to 485 (FNES…TSSS), 498 to 517 (KEKH…KPKK), 690 to 812 (NQNQ…NQNQ), 860 to 1074 (INNN…INSN), 1108 to 1175 (INNI…NSNS), 1188 to 1216 (SNSN…VDVD), 1224 to 1243 (VFIV…SVKT), 1340 to 1448 (ESNS…GNNI), 1476 to 1704 (IDNC…SNYY), 1731 to 1832 (NSNS…NEGF), and 2725 to 2773 (DRVR…NNNE). Positions 14–25 (HSTSFNDNFDSF) are enriched in polar residues. Composition is skewed to low complexity over residues 26–124 (GNQN…NPKN), 171–348 (NNNN…YDNY), 388–414 (NNNT…LNNN), 421–446 (YYDN…QTNK), and 454–478 (KNNN…NSNN). Positions 505 to 514 (HENGDISESK) are enriched in basic and acidic residues. Low complexity-rich tracts occupy residues 690-707 (NQNQ…QNHQ) and 714-749 (PQRQ…NQDQ). The span at 750–763 (YQDHDHEHEHDHDQ) shows a compositional bias: basic and acidic residues. The segment covering 764–781 (NQNQNQNQHQSRNQNQDQ) has biased composition (low complexity). Residues 782-795 (YQDHDHEHEHDHDQ) are compositionally biased toward basic and acidic residues. Composition is skewed to low complexity over residues 796 to 812 (NQNQ…NQNQ), 860 to 891 (INNN…QSQN), 898 to 911 (DNRI…SSRD), 921 to 991 (CDFN…SFNN), and 1000 to 1074 (NNHN…INSN). Residues 1188-1212 (SNSNGFNNNNSNDQRNIDSSSNSDI) show a composition bias toward low complexity. Polar residues predominate over residues 1230 to 1243 (TSSNKSNRASSVKT). Low complexity-rich tracts occupy residues 1377 to 1448 (DNGN…GNNI) and 1476 to 1639 (IDNC…NDND). Over residues 1640-1659 (IGNDFDNDNDNDSYIDDDNN) the composition is skewed to acidic residues. Composition is skewed to low complexity over residues 1660 to 1704 (VYDN…SNYY), 1731 to 1823 (NSNS…NNNS), and 2739 to 2754 (SSSG…SGGS). Acidic residues predominate over residues 2758 to 2773 (NLDDSENESDSENNNE).

This is an uncharacterized protein from Dictyostelium discoideum (Social amoeba).